A 337-amino-acid chain; its full sequence is Holliday junction branch migration complex subunit RuvB (337 aa).

The segment at 1–22 is disordered; it reads MEDERITSAEVQSPDEENEELS. The tract at residues 1–184 is large ATPase domain (RuvB-L); sequence MEDERITSAE…FGIVEHMNYY (184 aa). ATP-binding positions include L23, R24, G65, K68, T69, T70, 131–133, R174, Y184, and R221; that span reads EDF. A Mg(2+)-binding site is contributed by T69. Positions 185-255 are small ATPAse domain (RuvB-S); the sequence is NEADLANIVR…LVSQSLKLLQ (71 aa). The tract at residues 258–337 is head domain (RuvB-H); it reads NRGLDRTDKK…LGLIDQYMNK (80 aa). DNA contacts are provided by R313 and R318.

Belongs to the RuvB family. In terms of assembly, homohexamer. Forms an RuvA(8)-RuvB(12)-Holliday junction (HJ) complex. HJ DNA is sandwiched between 2 RuvA tetramers; dsDNA enters through RuvA and exits via RuvB. An RuvB hexamer assembles on each DNA strand where it exits the tetramer. Each RuvB hexamer is contacted by two RuvA subunits (via domain III) on 2 adjacent RuvB subunits; this complex drives branch migration. In the full resolvosome a probable DNA-RuvA(4)-RuvB(12)-RuvC(2) complex forms which resolves the HJ.

The protein localises to the cytoplasm. It catalyses the reaction ATP + H2O = ADP + phosphate + H(+). Its function is as follows. The RuvA-RuvB-RuvC complex processes Holliday junction (HJ) DNA during genetic recombination and DNA repair, while the RuvA-RuvB complex plays an important role in the rescue of blocked DNA replication forks via replication fork reversal (RFR). RuvA specifically binds to HJ cruciform DNA, conferring on it an open structure. The RuvB hexamer acts as an ATP-dependent pump, pulling dsDNA into and through the RuvAB complex. RuvB forms 2 homohexamers on either side of HJ DNA bound by 1 or 2 RuvA tetramers; 4 subunits per hexamer contact DNA at a time. Coordinated motions by a converter formed by DNA-disengaged RuvB subunits stimulates ATP hydrolysis and nucleotide exchange. Immobilization of the converter enables RuvB to convert the ATP-contained energy into a lever motion, pulling 2 nucleotides of DNA out of the RuvA tetramer per ATP hydrolyzed, thus driving DNA branch migration. The RuvB motors rotate together with the DNA substrate, which together with the progressing nucleotide cycle form the mechanistic basis for DNA recombination by continuous HJ branch migration. Branch migration allows RuvC to scan DNA until it finds its consensus sequence, where it cleaves and resolves cruciform DNA. The sequence is that of Holliday junction branch migration complex subunit RuvB from Pediococcus pentosaceus (strain ATCC 25745 / CCUG 21536 / LMG 10740 / 183-1w).